The following is a 34-amino-acid chain: MSDIN-like toxin proprotein 7 (34 aa).

Positions 1–10 (MSDINATRLP) are excised as a propeptide. Positions 11 to 17 (AWLTDCP) form a cross-link, cyclopeptide (Ala-Pro). A propeptide spanning residues 18–34 (CVGDDVNRLLTRGESLC) is cleaved from the precursor.

It belongs to the MSDIN fungal toxin family. Processed by the macrocyclase-peptidase enzyme POPB to yield a toxic cyclic heptapeptide. POPB first removes 10 residues from the N-terminus. Conformational trapping of the remaining peptide forces the enzyme to release this intermediate rather than proceed to macrocyclization. The enzyme rebinds the remaining peptide in a different conformation and catalyzes macrocyclization of the N-terminal 7 residues. As to expression, expressed in basidiocarps.

In terms of biological role, probable toxin that belongs to the MSDIN-like toxin family responsible for a large number of food poisoning cases and deaths. The polypeptide is MSDIN-like toxin proprotein 7 (Amanita exitialis (Guangzhou destroying angel)).